The sequence spans 280 residues: Diaminopimelate epimerase (280 aa).

Asn15 and Asn66 together coordinate substrate. The active-site Proton donor is Cys75. Substrate contacts are provided by residues 76 to 77, Asn163, Asn196, and 214 to 215; these read GN and ER. Cys223 serves as the catalytic Proton acceptor. 224–225 is a substrate binding site; the sequence is GT.

Belongs to the diaminopimelate epimerase family. As to quaternary structure, homodimer.

The protein resides in the cytoplasm. The catalysed reaction is (2S,6S)-2,6-diaminopimelate = meso-2,6-diaminopimelate. Its pathway is amino-acid biosynthesis; L-lysine biosynthesis via DAP pathway; DL-2,6-diaminopimelate from LL-2,6-diaminopimelate: step 1/1. Catalyzes the stereoinversion of LL-2,6-diaminopimelate (L,L-DAP) to meso-diaminopimelate (meso-DAP), a precursor of L-lysine and an essential component of the bacterial peptidoglycan. The polypeptide is Diaminopimelate epimerase (Phocaeicola vulgatus (strain ATCC 8482 / DSM 1447 / JCM 5826 / CCUG 4940 / NBRC 14291 / NCTC 11154) (Bacteroides vulgatus)).